Consider the following 878-residue polypeptide: MTKFTTEEVRSKFITYFKTNNHTHVPASSLIPHNDPSLMFVNSGMVQFKNVFTGQTKRPYHTAVTSQKSVRAGGKHNDLENVGYTARHHTFFEMLGNFSFGDYFKEQAIYYAWNLLTKEFELPKDKLYATIYHTDDEAASCWKKIAGFGDDRIIKIKTNDNFWSMGDTGPCGPCSEIFYDHGEQIYGGLPGTKYEDGDRFIEIWNMVFMQYEQIDKDTRIELPQKSIDTGMGLERMTAVLQHVSNNYDIDLFQEIINFTENIVKVKIEGEAKFSYRVIADHLRASSFLIADGVIPSNEGRGYVLRRIMRRAMRHAHMLGSQEPLMYKLLPKLVDLMGSVYPELKRAESFISRILEQEEIRFKTTLERGLKLLTEETETLKKGNELSGEIAFKLYDTYGFPLDLTEDILKNRDISIDHKGFEEQMLAQKERARKAWLGSGESKTDQLWFDIKEQHGSTEFLGYTLNEAECKIIALIKDNNLVNDIKKIDTQFLLISNQTPFYGESGGQMGDIGTIFAKDSDIEVIDTLKYLGSIIAHKCILKKGQINVGDSANFSIDIKYRQNLRIHHSATHILHAVLHEVLGQHVTQKGSLVAPTYLRFDISHSKAVTHEEITSIEDKVNEIIRDNHEVNTTLMTTEDAVKQGVMALFGEKYDSEVRVVKMGETSLELCGGTHVRRTGDIGSFKITSESAIAAGVRRIEAVCGEFVIKLIREKDSLLKSIENSLKTNKNELVTKVNNTLERNKELEKELEKTHLARLDLSIEQIEKQAEDIKGVKLIYRHIENLDNKVLRQAAANLTNKVEDLIVVYITGNNDKLSITVAVSKAITDKYNACIIAKELSLFLGGSGGGGQASLAQAGGSDIGKLTNIHEKLYSFITAS.

Residues histidine 567, histidine 571, cysteine 669, and histidine 673 each coordinate Zn(2+).

It belongs to the class-II aminoacyl-tRNA synthetase family. Zn(2+) is required as a cofactor.

Its subcellular location is the cytoplasm. It catalyses the reaction tRNA(Ala) + L-alanine + ATP = L-alanyl-tRNA(Ala) + AMP + diphosphate. Its function is as follows. Catalyzes the attachment of alanine to tRNA(Ala) in a two-step reaction: alanine is first activated by ATP to form Ala-AMP and then transferred to the acceptor end of tRNA(Ala). Also edits incorrectly charged Ser-tRNA(Ala) and Gly-tRNA(Ala) via its editing domain. This Rickettsia akari (strain Hartford) protein is Alanine--tRNA ligase.